An 85-amino-acid chain; its full sequence is Translation initiation factor IF-1 (85 aa).

Positions 1 to 72 (MAKEELIEMH…SKGRITFRHI (72 aa)) constitute an S1-like domain.

The protein belongs to the IF-1 family. Component of the 30S ribosomal translation pre-initiation complex which assembles on the 30S ribosome in the order IF-2 and IF-3, IF-1 and N-formylmethionyl-tRNA(fMet); mRNA recruitment can occur at any time during PIC assembly.

The protein localises to the cytoplasm. In terms of biological role, one of the essential components for the initiation of protein synthesis. Stabilizes the binding of IF-2 and IF-3 on the 30S subunit to which N-formylmethionyl-tRNA(fMet) subsequently binds. Helps modulate mRNA selection, yielding the 30S pre-initiation complex (PIC). Upon addition of the 50S ribosomal subunit IF-1, IF-2 and IF-3 are released leaving the mature 70S translation initiation complex. This is Translation initiation factor IF-1 from Polaromonas naphthalenivorans (strain CJ2).